The following is a 357-amino-acid chain: Dual-specificity RNA methyltransferase RlmN (357 aa).

The Proton acceptor role is filled by Glu-89. Residues 109–340 (EGEKYTVCVS…CTIRESKALD (232 aa)) form the Radical SAM core domain. A disulfide bridge connects residues Cys-116 and Cys-345. Residues Cys-123, Cys-127, and Cys-130 each coordinate [4Fe-4S] cluster. Residues 173–174 (GE), Ser-203, 226–228 (SLH), and Asn-302 each bind S-adenosyl-L-methionine. Cys-345 acts as the S-methylcysteine intermediate in catalysis.

Belongs to the radical SAM superfamily. RlmN family. The cofactor is [4Fe-4S] cluster.

It localises to the cytoplasm. It catalyses the reaction adenosine(2503) in 23S rRNA + 2 reduced [2Fe-2S]-[ferredoxin] + 2 S-adenosyl-L-methionine = 2-methyladenosine(2503) in 23S rRNA + 5'-deoxyadenosine + L-methionine + 2 oxidized [2Fe-2S]-[ferredoxin] + S-adenosyl-L-homocysteine. The enzyme catalyses adenosine(37) in tRNA + 2 reduced [2Fe-2S]-[ferredoxin] + 2 S-adenosyl-L-methionine = 2-methyladenosine(37) in tRNA + 5'-deoxyadenosine + L-methionine + 2 oxidized [2Fe-2S]-[ferredoxin] + S-adenosyl-L-homocysteine. In terms of biological role, specifically methylates position 2 of adenine 2503 in 23S rRNA and position 2 of adenine 37 in tRNAs. m2A2503 modification seems to play a crucial role in the proofreading step occurring at the peptidyl transferase center and thus would serve to optimize ribosomal fidelity. The polypeptide is Dual-specificity RNA methyltransferase RlmN (Helicobacter pylori (strain P12)).